Consider the following 332-residue polypeptide: Serine, glycine, tyrosine and glutamine-rich protein (332 aa).

Residues 1–17 form the signal peptide; that stretch reads MMKTVLLLVVLVGVAYC. The interval 39–81 is disordered; that stretch reads SSSSSSSSSSGGGGSSGGGASGGGGGGGSSGGGGASGGGGGGS. Positions 48–81 are enriched in gly residues; that stretch reads SGGGGSSGGGASGGGGGGGSSGGGGASGGGGGGS.

As to expression, prismatic layer of shell (at protein level). Expressed primarily in the mantle with highest level in the mantle edge and lower level in the mantle pallium.

The protein resides in the secreted. This chain is Serine, glycine, tyrosine and glutamine-rich protein, found in Margaritifera margaritifera (Freshwater pearl mussel).